Here is a 149-residue protein sequence, read N- to C-terminus: Internal scaffolding protein ORF3 (149 aa).

It belongs to the microvidae B protein family.

The protein resides in the host cytoplasm. Functionally, participates in the assembly of the viral procapsid in the cytoplasm. Released from the procapsid upon genome packaging, possibly through affinity displacement by the protein ORF8, or by proteolysis. In Spiroplasma virus 4 (SpV4), this protein is Internal scaffolding protein ORF3.